The sequence spans 617 residues: DNA-(apurinic or apyrimidinic site) endonuclease (617 aa).

A disordered region spans residues 74-99 (IKNSDEQNNSNNNNNNSSSSNFCSNN). Positions 81-99 (NNSNNNNNNSSSSNFCSNN) are enriched in low complexity. Positions 284 and 317 each coordinate Mg(2+). The interval 326–349 (SEPCDNKNKNKNKNDGIRDRGKIK) is disordered. Residues 329-349 (CDNKNKNKNKNDGIRDRGKIK) are compositionally biased toward basic and acidic residues. Residues aspartate 474, asparagine 476, aspartate 606, and histidine 607 each coordinate Mg(2+). Histidine 607 serves as the catalytic Proton acceptor.

Belongs to the DNA repair enzymes AP/ExoA family. Mg(2+) serves as cofactor. Requires Mn(2+) as cofactor. In terms of processing, may be proteolytically cleaved into a 64 kDa form.

The protein resides in the mitochondrion. The enzyme catalyses Exonucleolytic cleavage in the 3'- to 5'-direction to yield nucleoside 5'-phosphates.. With respect to regulation, apurinic/apyrimidinic (AP) endonuclease activity is maximal at low Mg(2+) (0.5-2 mM) with no activity seen at high concentrations (more than 10 mM). 3'-5' exonuclease activity is maximal in the range of 0.5-2 mM Mg(2+) with activity seen up to 10 mM Mg(2+). Functionally, multifunctional protein that plays a central role in mitochondrial DNA base excision repair (BER) pathway induced by oxidative stress. Has apurinic/apyrimidinic (AP) endonuclease activity towards double-stranded DNA (dsDNA). Has nucleotide incision repair (NIR) activity; acts on dsDNA with oxidized bases thymine glycol and 5,6-dihydro-2'-deoxyuridine. Has 3'-5' exonuclease; can use dsDNA templates with 3'-OH termini including blunt-end, gapped and mismatched 3'-recessed. Has 3'-phosphatase activity; cleaves 3'-phosphate from blunt, recessed and gapped dsDNA templates, followed by 3'-5' exonuclease activity. Has RNase H-like activity; cleaves RNA on 3'-recessed RNA-DNA duplex. Plays a role in merosome infection of host erythrocytes. The sequence is that of DNA-(apurinic or apyrimidinic site) endonuclease from Plasmodium falciparum (isolate 3D7).